A 490-amino-acid chain; its full sequence is Glutamyl-tRNA(Gln) amidotransferase subunit A (490 aa).

Residues Lys78 and Ser153 each act as charge relay system in the active site. Ser177 serves as the catalytic Acyl-ester intermediate.

The protein belongs to the amidase family. GatA subfamily. In terms of assembly, heterotrimer of A, B and C subunits.

It carries out the reaction L-glutamyl-tRNA(Gln) + L-glutamine + ATP + H2O = L-glutaminyl-tRNA(Gln) + L-glutamate + ADP + phosphate + H(+). In terms of biological role, allows the formation of correctly charged Gln-tRNA(Gln) through the transamidation of misacylated Glu-tRNA(Gln) in organisms which lack glutaminyl-tRNA synthetase. The reaction takes place in the presence of glutamine and ATP through an activated gamma-phospho-Glu-tRNA(Gln). The sequence is that of Glutamyl-tRNA(Gln) amidotransferase subunit A from Bdellovibrio bacteriovorus (strain ATCC 15356 / DSM 50701 / NCIMB 9529 / HD100).